A 629-amino-acid polypeptide reads, in one-letter code: MPEAVAAAVSPAAAAATAMCAEHREKLEHIERVTRNAGQEQRRVLEEILAQNAQAEYLRRLGVPGDAPGADEAFRRLAPLVTYEDILPDVLRIANGDTSPILSGKPVSEFLTSSGTSGGERKLMPTIEEEMERRSGLYSLLMPVMSRQVPGLDKGKAMYLYFVKSEWRTPGGLPARPVLTSFYRSRYFLERPHDPYTVYTSPDEAVLCEDAYQSMYAQLICGLVHRADVLRVGAVFASGFLRAIRFLEKHWPSLCRDIRAGELDGGVTDPAVRGAVGRVLRGADPALADAIEAECARPSWQGIIRRVWPSTKYIDVIVTGAMAQYIPTLEFYGGGLPLACTMYASSECYFGLNLNPMCKPSEVAYTLIPTMCYFEFLPVNSGANDVAAPEPDHRGLVDLVDVKLGHEYELVVTTYSGLYRYRVGDVLRVAGFKNAAPMFAFVRRKNVALSIDSDKTDEAELHAAVTEAVQHLAPFGASLVEYTSYADTATTIPGHYVLFWELRSPAGGTPVPASVFEDCCLAVEEGLNSVYRQCRAADRSIGPLEIRVVADGTFDKLMDYALSRGASINQYKAPRCVRPGPVVELLDGRVQATYFSPKCPKWCAGGNKQWISSGAAAKKTTTTCDSLAV.

Belongs to the IAA-amido conjugating enzyme family. Expressed in flowers.

Its function is as follows. May catalyze the synthesis of indole-3-acetic acid (IAA)-amino acid conjugates, providing a mechanism for the plant to cope with the presence of excess auxin. The protein is Probable indole-3-acetic acid-amido synthetase GH3.4 (GH3.4) of Oryza sativa subsp. japonica (Rice).